Reading from the N-terminus, the 465-residue chain is Glutamyl-tRNA reductase 2 (465 aa).

Substrate-binding positions include 62-65 (TCNR), serine 122, 127-129 (EGQ), and glutamine 133. Cysteine 63 functions as the Nucleophile in the catalytic mechanism. Position 204–209 (204–209 (GAGKMG)) interacts with NADP(+).

Belongs to the glutamyl-tRNA reductase family.

The protein localises to the plastid. It localises to the chloroplast. The catalysed reaction is (S)-4-amino-5-oxopentanoate + tRNA(Glu) + NADP(+) = L-glutamyl-tRNA(Glu) + NADPH + H(+). The protein operates within porphyrin-containing compound metabolism; protoporphyrin-IX biosynthesis; 5-aminolevulinate from L-glutamyl-tRNA(Glu): step 1/2. Its function is as follows. Catalyzes the NADPH-dependent reduction of glutamyl-tRNA(Glu) to glutamate 1-semialdehyde (GSA). This Hordeum vulgare (Barley) protein is Glutamyl-tRNA reductase 2 (HEMA2).